Reading from the N-terminus, the 470-residue chain is ATP synthase subunit beta (470 aa).

156-163 lines the ATP pocket; it reads GGAGVGKT.

It belongs to the ATPase alpha/beta chains family. In terms of assembly, F-type ATPases have 2 components, CF(1) - the catalytic core - and CF(0) - the membrane proton channel. CF(1) has five subunits: alpha(3), beta(3), gamma(1), delta(1), epsilon(1). CF(0) has three main subunits: a(1), b(2) and c(9-12). The alpha and beta chains form an alternating ring which encloses part of the gamma chain. CF(1) is attached to CF(0) by a central stalk formed by the gamma and epsilon chains, while a peripheral stalk is formed by the delta and b chains.

It localises to the cell inner membrane. The enzyme catalyses ATP + H2O + 4 H(+)(in) = ADP + phosphate + 5 H(+)(out). Its function is as follows. Produces ATP from ADP in the presence of a proton gradient across the membrane. The catalytic sites are hosted primarily by the beta subunits. The chain is ATP synthase subunit beta from Thermosipho africanus (strain TCF52B).